The following is a 1231-amino-acid chain: S-layer protein A (1231 aa).

The signal sequence occupies residues 1 to 35 (MNKTLGLILTSVFLLSTLGIITGFVIPTQAANSND).

This sequence belongs to the Sulfolobales SlaA family. The mushroom-shaped unit cells of the Sulfolobales' S-layers may consist of three SlaB subunits and six SlaA subunits.

It localises to the secreted. Its subcellular location is the cell wall. The protein localises to the S-layer. S-layer large protein. May form the highly ordered outer sheath. The chain is S-layer protein A from Saccharolobus solfataricus (strain ATCC 35092 / DSM 1617 / JCM 11322 / P2) (Sulfolobus solfataricus).